The sequence spans 249 residues: Homeobox protein TGIF2LX (249 aa).

Disordered regions lie at residues 1 to 62 and 126 to 192; these read MEAA…KRKG and DPIV…KLTV. Residues 9 to 27 show a composition bias toward basic and acidic residues; it reads AETRSRVEKDSRRAKKDSP. A compositionally biased stretch (polar residues) spans 28 to 46; sequence AKTQSPAQDTSIMLRNNAD. Residues 55–118 constitute a DNA-binding region (homeobox; TALE-type); sequence EHKKKRKGYL…INARRRILPD (64 aa). The segment covering 159 to 172 has biased composition (polar residues); the sequence is DNVQSLPLRSSPKG.

Belongs to the TALE/TGIF homeobox family.

The protein resides in the nucleus. May have a transcription role in testis. The protein is Homeobox protein TGIF2LX (TGIF2LX) of Macaca fascicularis (Crab-eating macaque).